Here is a 217-residue protein sequence, read N- to C-terminus: Methylthioribulose-1-phosphate dehydratase (217 aa).

2 residues coordinate Zn(2+): His106 and His108.

This sequence belongs to the aldolase class II family. MtnB subfamily. Requires Zn(2+) as cofactor.

It carries out the reaction 5-(methylsulfanyl)-D-ribulose 1-phosphate = 5-methylsulfanyl-2,3-dioxopentyl phosphate + H2O. Its pathway is amino-acid biosynthesis; L-methionine biosynthesis via salvage pathway; L-methionine from S-methyl-5-thio-alpha-D-ribose 1-phosphate: step 2/6. In terms of biological role, catalyzes the dehydration of methylthioribulose-1-phosphate (MTRu-1-P) into 2,3-diketo-5-methylthiopentyl-1-phosphate (DK-MTP-1-P). In Xanthomonas euvesicatoria pv. vesicatoria (strain 85-10) (Xanthomonas campestris pv. vesicatoria), this protein is Methylthioribulose-1-phosphate dehydratase.